The primary structure comprises 555 residues: Formate--tetrahydrofolate ligase (555 aa).

An ATP-binding site is contributed by 64-71; the sequence is TPAGEGKT.

It belongs to the formate--tetrahydrofolate ligase family.

The catalysed reaction is (6S)-5,6,7,8-tetrahydrofolate + formate + ATP = (6R)-10-formyltetrahydrofolate + ADP + phosphate. The protein operates within one-carbon metabolism; tetrahydrofolate interconversion. The polypeptide is Formate--tetrahydrofolate ligase (Dinoroseobacter shibae (strain DSM 16493 / NCIMB 14021 / DFL 12)).